The chain runs to 878 residues: Phosphoenolpyruvate carboxylase (878 aa).

Residues histidine 140 and lysine 545 contribute to the active site.

It belongs to the PEPCase type 1 family. Requires Mg(2+) as cofactor.

It carries out the reaction oxaloacetate + phosphate = phosphoenolpyruvate + hydrogencarbonate. Functionally, forms oxaloacetate, a four-carbon dicarboxylic acid source for the tricarboxylic acid cycle. The chain is Phosphoenolpyruvate carboxylase from Pseudomonas syringae pv. tomato (strain ATCC BAA-871 / DC3000).